A 471-amino-acid chain; its full sequence is Lincomycin resistance protein LmrB (471 aa).

A run of 13 helical transmembrane segments spans residues 15–34 (PIIASFLMAGFIGLFSETAL), 55–77 (LTTGYLLTLGILVPISGLLLQWF), 82–104 (LFFTAVSFSIAGTLIAALSPTFA), 111–131 (VVQAVGTALLLPLMFNTILLI), 141–163 (MGMIGLVIMFAPAVGPTISGLIL), 170–187 (WIFWISLPFLIIALLFGM), 202–224 (DILSIILSTLGFGGVVFAFSSAG), 231–253 (ATVLVSIIVGGIALGLFVWRQLT), 268–290 (MFTLGLILVFISFMMILSTMILL), 297–319 (SLALAAFSAGLVLLPGGVLNGLM), 329–351 (AYGPRALVIPGFIVAVIALFFLT), 358–380 (SALTIIVLHSVLMIGISMVMMPA), and 445–467 (GIQNAFVFGLIMACIGLLCSLFI).

Belongs to the major facilitator superfamily. EmrB family.

The protein localises to the cell membrane. Proton-dependent transporter. May mediate the efflux of lincomycin. The polypeptide is Lincomycin resistance protein LmrB (lmrB) (Listeria innocua serovar 6a (strain ATCC BAA-680 / CLIP 11262)).